The following is a 422-amino-acid chain: MLDLEVVPERSLGNEQWEFTLGMPLAQAVAILQKHCRIIKNVQVLYSEQSPLSHDLILNLTQDGIKLMFDAFNQRLKVIEVCDLTKVKLKYCGVHFNSQAIAPTIEQIDQSFGATHPGVYNSAEQLFHLNFRGLSFSFQLDSWTEAPKYEPNFAHGLASLQIPHGATVKRMYIYSGNSLQDTKAPMMPLSCFLGNVYAESVDVLRDGTGPAGLRLRLLAAGCGPGLLADAKMRVFERSVYFGDSCQDVLSMLGSPHKVFYKSEDKMKIHSPSPHKQVPSKCNDYFFNYFTLGVDILFDANTHKVKKFVLHTNYPGHYNFNIYHRCEFKIPLAIKKENADGQTETCTTYSKWDNIQELLGHPVEKPVVLHRSSSPNNTNPFGSTFCFGLQRMIFEVMQNNHIASVTLYGPPRPGSHLRTAELP.

It belongs to the PHAF1 family. As to quaternary structure, interacts with BCAS3; the interaction is requrired for the association with the phagophore.

The protein localises to the cytoplasm. It is found in the preautophagosomal structure. Plays a regulatory role in autophagic activity. In complex with BCAS3, associates with the autophagosome formation site during both non-selective and selective autophagy. This chain is Phagosome assembly factor 1, found in Homo sapiens (Human).